Reading from the N-terminus, the 226-residue chain is ATP synthase subunit a (226 aa).

6 consecutive transmembrane segments (helical) span residues 18–38 (FITGFFVVLTAVLMFLISLGA), 76–96 (YFPLAGTIALYVFFSNMIGII), 105–125 (SWSFTLVLALIVFFYYHFEGI), 134–154 (FAHFAGPVKWLAPFMFPIEII), 179–199 (LIMLLLVPWVIPVAPFMVLFF), and 201–221 (GILQAFVFMILTYVYLAGAVL).

It belongs to the ATPase A chain family. F-type ATPases have 2 components, CF(1) - the catalytic core - and CF(0) - the membrane proton channel. CF(1) has five subunits: alpha(3), beta(3), gamma(1), delta(1), epsilon(1). CF(0) has three main subunits: a(1), b(2) and c(9-12). The alpha and beta chains form an alternating ring which encloses part of the gamma chain. CF(1) is attached to CF(0) by a central stalk formed by the gamma and epsilon chains, while a peripheral stalk is formed by the delta and b chains.

Its subcellular location is the cell inner membrane. In terms of biological role, key component of the proton channel; it plays a direct role in the translocation of protons across the membrane. This is ATP synthase subunit a from Helicobacter acinonychis (strain Sheeba).